Here is a 156-residue protein sequence, read N- to C-terminus: MPRRRVVAKREVLPDPKFGSSTLAKFMNHVMISGKKSTAEKIVYGALDIVSEKLNKDPLETFSEALENISPLVEVKSRRVGGATYQVPVEVRPARRTALAMRWLVEYSRNRGEKSMAQRLAGELIDAAQSKGGAVKKREDVHRMAEANKAFSHFRF.

This sequence belongs to the universal ribosomal protein uS7 family. In terms of assembly, part of the 30S ribosomal subunit. Contacts proteins S9 and S11.

Its function is as follows. One of the primary rRNA binding proteins, it binds directly to 16S rRNA where it nucleates assembly of the head domain of the 30S subunit. Is located at the subunit interface close to the decoding center, probably blocks exit of the E-site tRNA. This is Small ribosomal subunit protein uS7 from Saccharophagus degradans (strain 2-40 / ATCC 43961 / DSM 17024).